Consider the following 378-residue polypeptide: Dual-specificity RNA methyltransferase RlmN (378 aa).

Glu-95 (proton acceptor) is an active-site residue. The Radical SAM core domain maps to 101–345; sequence EETRGTLCVS…TTIRKTRGDD (245 aa). A disulfide bond links Cys-108 and Cys-350. [4Fe-4S] cluster contacts are provided by Cys-115, Cys-119, and Cys-122. Residues 176 to 177, Ser-208, 230 to 232, and Asn-307 each bind S-adenosyl-L-methionine; these read GE and SLH. Cys-350 serves as the catalytic S-methylcysteine intermediate.

Belongs to the radical SAM superfamily. RlmN family. The cofactor is [4Fe-4S] cluster.

It is found in the cytoplasm. It catalyses the reaction adenosine(2503) in 23S rRNA + 2 reduced [2Fe-2S]-[ferredoxin] + 2 S-adenosyl-L-methionine = 2-methyladenosine(2503) in 23S rRNA + 5'-deoxyadenosine + L-methionine + 2 oxidized [2Fe-2S]-[ferredoxin] + S-adenosyl-L-homocysteine. The enzyme catalyses adenosine(37) in tRNA + 2 reduced [2Fe-2S]-[ferredoxin] + 2 S-adenosyl-L-methionine = 2-methyladenosine(37) in tRNA + 5'-deoxyadenosine + L-methionine + 2 oxidized [2Fe-2S]-[ferredoxin] + S-adenosyl-L-homocysteine. Its function is as follows. Specifically methylates position 2 of adenine 2503 in 23S rRNA and position 2 of adenine 37 in tRNAs. m2A2503 modification seems to play a crucial role in the proofreading step occurring at the peptidyl transferase center and thus would serve to optimize ribosomal fidelity. The polypeptide is Dual-specificity RNA methyltransferase RlmN (Burkholderia pseudomallei (strain K96243)).